The following is a 510-amino-acid chain: Cytochrome P450 11B2, mitochondrial (510 aa).

The N-terminal 34 residues, 1–34 (MGACDNDFIELHSRVTADVWLARPWQCLHRTRAL), are a transit peptide targeting the mitochondrion. Phe391 is a 21-hydroxyprogesterone binding site. Heme is bound at residue Cys457.

The protein belongs to the cytochrome P450 family. The cofactor is heme. Adrenal cortex.

It localises to the mitochondrion inner membrane. It catalyses the reaction a steroid + 2 reduced [adrenodoxin] + O2 + 2 H(+) = an 11beta-hydroxysteroid + 2 oxidized [adrenodoxin] + H2O. It carries out the reaction 21-hydroxyprogesterone + 2 reduced [adrenodoxin] + O2 + 2 H(+) = corticosterone + 2 oxidized [adrenodoxin] + H2O. The catalysed reaction is corticosterone + 2 reduced [adrenodoxin] + O2 + 2 H(+) = 18-hydroxycorticosterone + 2 oxidized [adrenodoxin] + H2O. The enzyme catalyses 18-hydroxycorticosterone + 2 reduced [adrenodoxin] + O2 + 2 H(+) = aldosterone + 2 oxidized [adrenodoxin] + 2 H2O. It catalyses the reaction 11-deoxycortisol + 2 reduced [adrenodoxin] + O2 + 2 H(+) = cortisol + 2 oxidized [adrenodoxin] + H2O. It carries out the reaction cortisol + 2 reduced [adrenodoxin] + O2 + 2 H(+) = 18-hydroxycortisol + 2 oxidized [adrenodoxin] + H2O. The catalysed reaction is 21-hydroxyprogesterone + 2 reduced [adrenodoxin] + O2 + 2 H(+) = 18-hydroxy-11-deoxycorticosterone + 2 oxidized [adrenodoxin] + H2O. The enzyme catalyses 18-hydroxycortisol + 2 reduced [adrenodoxin] + O2 + 2 H(+) = 18-oxocortisol + 2 oxidized [adrenodoxin] + 2 H2O. It participates in steroid biosynthesis. In terms of biological role, a cytochrome P450 monooxygenase that catalyzes the biosynthesis of aldosterone, the main mineralocorticoid responsible for salt and water homeostasis. Catalyzes three sequential oxidative reactions of 11-deoxycorticosterone (21-hydroxyprogesterone), namely 11-beta hydroxylation, followed by two successive oxidations at C18 yielding 18-hydroxy and then 18-oxo intermediates (that do not leave the enzyme active site during the consecutive hydroxylation reactions), and end with the formation of aldosterone. Can also produce 18-hydroxycortisol and 18-oxocortisol, derived from successive oxidations of cortisol at C18, normally found at very low levels, but significantly increased in primary aldosteronism, the most common form of secondary hypertension. Mechanistically, uses molecular oxygen inserting one oxygen atom into a substrate and reducing the second into a water molecule. Two electrons are provided by NADPH via a two-protein mitochondrial transfer system comprising flavoprotein FDXR (adrenodoxin/ferredoxin reductase) and nonheme iron-sulfur protein FDX1 or FDX2 (adrenodoxin/ferredoxin). Could also be involved in the androgen metabolic pathway. In Rattus norvegicus (Rat), this protein is Cytochrome P450 11B2, mitochondrial (Cyp11b2).